Here is a 284-residue protein sequence, read N- to C-terminus: Trimeric intracellular cation channel type B-B (284 aa).

The Lumenal portion of the chain corresponds to 1–15; sequence MESLSEVSVQFSQLS. The helical transmembrane segment at 16-32 threads the bilayer; sequence MFPFFDMAHYLASVMSA. Residues 33–44 are Cytoplasmic-facing; the sequence is REQAGALDIASH. A helical membrane pass occupies residues 45–68; sequence SPMASWFSAMLHCFGGGILSSILL. At 69–79 the chain is on the lumenal side; it reads AEPPVGILANT. The chain crosses the membrane as a helical span at residues 80–99; that stretch reads TNIMLASAIWYMVYYFPYDL. At 100-102 the chain is on the cytoplasmic side; the sequence is FYN. The chain crosses the membrane as a helical span at residues 103-121; it reads CFFFLPIRLIAAGMKEVTR. A 1,2-diacyl-sn-glycero-3-phospho-(1D-myo-inositol-4,5-bisphosphate) is bound by residues Lys117 and Arg121. Topologically, residues 122 to 139 are lumenal; that stretch reads TWKILSGITHAHSHYKDA. Residues 140 to 157 form a helical membrane-spanning segment; the sequence is WLVMITIGWARGAGGGLI. At 158–178 the chain is on the cytoplasmic side; it reads SNFEQLVRGVWKPESNEFLKM. The helical transmembrane segment at 179 to 196 threads the bilayer; the sequence is SYPVKVTLIGAVLFTLQH. At 197 to 204 the chain is on the lumenal side; sequence GHYLPISR. Residues 205 to 225 traverse the membrane as a helical segment; sequence HNLMFIYTMFLVSIKVTMMLT. The Cytoplasmic segment spans residues 226–284; the sequence is HSAGSPFLPLETPLHRILFGLRQNQAEVRESPSSSGAKGKPSKKTLDKDSGEQSNKKDK. The segment at 250 to 284 is disordered; that stretch reads QAEVRESPSSSGAKGKPSKKTLDKDSGEQSNKKDK. The segment covering 269–284 has biased composition (basic and acidic residues); that stretch reads KTLDKDSGEQSNKKDK.

This sequence belongs to the TMEM38 family. In terms of assembly, homotrimer; conformation seems to be controled by binding to diacylglycerol (DAG).

Its subcellular location is the endoplasmic reticulum membrane. It catalyses the reaction K(+)(in) = K(+)(out). Channel activity is activated by increased cytosolic Ca(2+) levels and blocked by luminal high Ca(2+) levels. Intracellular monovalent cation channel required for maintenance of rapid intracellular calcium release. Acts as a potassium counter-ion channel that functions in synchronization with calcium release from intracellular stores. Activated by increased cytosolic Ca(2+) levels. This Xenopus laevis (African clawed frog) protein is Trimeric intracellular cation channel type B-B (tmem38b-b).